Consider the following 268-residue polypeptide: Protein CDV3 homolog (268 aa).

Residues 40–50 show a composition bias toward basic and acidic residues; that stretch reads KREVVKPKKPE. Disordered regions lie at residues 40 to 145 and 184 to 268; these read KREV…ERVG and QQAG…DEAS. Residues 51 to 61 show a composition bias toward low complexity; sequence AAAGGVAVVGE. Residues 76 to 85 are compositionally biased toward acidic residues; the sequence is VEEEWKEFEE. Over residues 98 to 107 the composition is skewed to polar residues; that stretch reads QLSTITAQES. Residues 123–132 are compositionally biased toward acidic residues; sequence NYDEDDEDSN. Basic and acidic residues predominate over residues 221–239; it reads RPEEQRKKKNEPAFEEVRH.

Belongs to the CDV3 family.

The protein is Protein CDV3 homolog of Drosophila yakuba (Fruit fly).